The chain runs to 900 residues: Alanine--tRNA ligase (900 aa).

The Zn(2+) site is built by His604, His608, Cys708, and His712.

This sequence belongs to the class-II aminoacyl-tRNA synthetase family. Requires Zn(2+) as cofactor.

Its subcellular location is the cytoplasm. The catalysed reaction is tRNA(Ala) + L-alanine + ATP = L-alanyl-tRNA(Ala) + AMP + diphosphate. Its function is as follows. Catalyzes the attachment of alanine to tRNA(Ala) in a two-step reaction: alanine is first activated by ATP to form Ala-AMP and then transferred to the acceptor end of tRNA(Ala). Also edits incorrectly charged Ser-tRNA(Ala) and Gly-tRNA(Ala) via its editing domain. The chain is Alanine--tRNA ligase from Saccharolobus islandicus (strain M.16.27) (Sulfolobus islandicus).